A 474-amino-acid chain; its full sequence is Proline--tRNA ligase (474 aa).

This sequence belongs to the class-II aminoacyl-tRNA synthetase family. ProS type 3 subfamily. As to quaternary structure, homodimer.

Its subcellular location is the cytoplasm. The enzyme catalyses tRNA(Pro) + L-proline + ATP = L-prolyl-tRNA(Pro) + AMP + diphosphate. Its function is as follows. Catalyzes the attachment of proline to tRNA(Pro) in a two-step reaction: proline is first activated by ATP to form Pro-AMP and then transferred to the acceptor end of tRNA(Pro). This is Proline--tRNA ligase from Onion yellows phytoplasma (strain OY-M).